We begin with the raw amino-acid sequence, 246 residues long: MEPNTVIPKYNVRGFEIWGFRDMAQVLDHLLGSGPVKTGTLVAMNAEKLLKAEDDTALCELIKNAEYLYADGISMVRAIRRKYPQAELSRVAGADLWEALMQRAGQQGTPVFLVGGKPDVLAETEAKLRAQWNVNLVGSQDGYFTPEQREALFARIAASGAAIVTVAMGSPKQEIFMRDCRKFYPDALYMGVGGTYDVFTSHVKRAPKIWQNMGLEWLYRLLAQPSRIRRQLKLLKFVGYYYSGRL.

It belongs to the glycosyltransferase 26 family.

It carries out the reaction UDP-N-acetyl-alpha-D-mannosaminouronate + N-acetyl-alpha-D-glucosaminyl-di-trans,octa-cis-undecaprenyl diphosphate = beta-D-ManNAcA-(1-&gt;4)-alpha-D-GlcNAc-di-trans,octa-cis-undecaprenyl diphosphate + UDP + H(+). It functions in the pathway bacterial outer membrane biogenesis; enterobacterial common antigen biosynthesis. Its function is as follows. Catalyzes the synthesis of Und-PP-GlcNAc-ManNAcA (Lipid II), the second lipid-linked intermediate involved in enterobacterial common antigen (ECA) synthesis. This is UDP-N-acetyl-D-mannosaminuronic acid transferase from Yersinia pestis bv. Antiqua (strain Antiqua).